We begin with the raw amino-acid sequence, 128 residues long: Large ribosomal subunit protein uL22 (128 aa).

This sequence belongs to the universal ribosomal protein uL22 family. In terms of assembly, part of the 50S ribosomal subunit.

Functionally, this protein binds specifically to 23S rRNA; its binding is stimulated by other ribosomal proteins, e.g. L4, L17, and L20. It is important during the early stages of 50S assembly. It makes multiple contacts with different domains of the 23S rRNA in the assembled 50S subunit and ribosome. The globular domain of the protein is located near the polypeptide exit tunnel on the outside of the subunit, while an extended beta-hairpin is found that lines the wall of the exit tunnel in the center of the 70S ribosome. The chain is Large ribosomal subunit protein uL22 from Prochlorococcus marinus (strain AS9601).